Consider the following 230-residue polypeptide: C-reactive protein (230 aa).

The signal sequence occupies residues 1–19; that stretch reads MEKLLWCLLITISFSQAFG. Residues 24–223 enclose the Pentraxin (PTX) domain; it reads SKQAFVFPGV…DVFIKPQLWP (200 aa). Residues Cys55 and Cys114 are joined by a disulfide bond. Asn78 contacts Ca(2+). Asn147 carries N-linked (GlcNAc...) asparagine glycosylation. Glu155, Gln156, Asp157, and Gln167 together coordinate Ca(2+). The cysteines at positions 227 and 228 are disulfide-linked.

It belongs to the pentraxin family. As to quaternary structure, homopentamer; disulfide-linked. Pentraxin (or pentaxin) have a discoid arrangement of 5 non-covalently bound subunits. Two of the five chains form a dimer linked by two interchain disulfide bonds located in the C-terminal heptapeptide and specific to rat CRP. Interacts with FCN1; may regulate monocyte activation by FCN1. Ca(2+) serves as cofactor. The last two cysteines are involved either in interchain disulfide bonds or in an intrachain bond. Found in plasma.

It is found in the secreted. Displays several functions associated with host defense: it promotes agglutination, bacterial capsular swelling, phagocytosis and complement fixation through its calcium-dependent binding to phosphorylcholine. Can interact with DNA and histones and may scavenge nuclear material released from damaged circulating cells. This chain is C-reactive protein (Crp), found in Rattus norvegicus (Rat).